The chain runs to 740 residues: Copalyl diphosphate synthase 2 (740 aa).

Lys154 contributes to the substrate binding site. Residues Asp287 and Asp289 each contribute to the Mg(2+) site. The DXDD motif motif lies at 287–290 (DADD). Substrate is bound at residue Lys373.

It belongs to the terpene synthase family. The cofactor is Mg(2+).

The catalysed reaction is (2E,6E,10E)-geranylgeranyl diphosphate = (+)-copalyl diphosphate. Its pathway is secondary metabolite biosynthesis; terpenoid biosynthesis. In terms of biological role, monofunctional diterpene synthase converting geranylgeranyl diphosphate to copalyl diphosphate. In Selaginella moellendorffii (Spikemoss), this protein is Copalyl diphosphate synthase 2 (CPS2).